A 117-amino-acid polypeptide reads, in one-letter code: Protein TCL1B2 (117 aa).

It belongs to the TCL1 family.

This Mus musculus (Mouse) protein is Protein TCL1B2 (Tcl1b2).